We begin with the raw amino-acid sequence, 393 residues long: CCA-adding enzyme (393 aa).

ATP contacts are provided by Gly-27 and Arg-30. CTP is bound by residues Gly-27 and Arg-30. Residues Asp-40 and Asp-42 each contribute to the Mg(2+) site. Residues Arg-111, Asp-154, Arg-157, Arg-160, and Arg-163 each contribute to the ATP site. CTP contacts are provided by Arg-111, Asp-154, Arg-157, Arg-160, and Arg-163.

Belongs to the tRNA nucleotidyltransferase/poly(A) polymerase family. Bacterial CCA-adding enzyme type 3 subfamily. In terms of assembly, homodimer. Mg(2+) is required as a cofactor.

It catalyses the reaction a tRNA precursor + 2 CTP + ATP = a tRNA with a 3' CCA end + 3 diphosphate. The enzyme catalyses a tRNA with a 3' CCA end + 2 CTP + ATP = a tRNA with a 3' CCACCA end + 3 diphosphate. Catalyzes the addition and repair of the essential 3'-terminal CCA sequence in tRNAs without using a nucleic acid template. Adds these three nucleotides in the order of C, C, and A to the tRNA nucleotide-73, using CTP and ATP as substrates and producing inorganic pyrophosphate. tRNA 3'-terminal CCA addition is required both for tRNA processing and repair. Also involved in tRNA surveillance by mediating tandem CCA addition to generate a CCACCA at the 3' terminus of unstable tRNAs. While stable tRNAs receive only 3'-terminal CCA, unstable tRNAs are marked with CCACCA and rapidly degraded. The sequence is that of CCA-adding enzyme from Listeria monocytogenes serotype 4a (strain HCC23).